The primary structure comprises 154 residues: Protein AE7-like 1 (154 aa).

Belongs to the MIP18 family.

Functionally, may play a role in chromosome segregation through establishment of sister chromatid cohesion. Unable to complement ae7 mutants, and thus probably not involved in the cytosolic iron-sulfur assembly (CIA) pathway. In Arabidopsis thaliana (Mouse-ear cress), this protein is Protein AE7-like 1.